Reading from the N-terminus, the 298-residue chain is Tyrosine recombinase XerC (298 aa).

One can recognise a Core-binding (CB) domain in the interval 1–84; the sequence is MNHIQEAFLN…TLRTFYEYWM (84 aa). The Tyr recombinase domain occupies 105–286; sequence YLPQFFYEEE…SNQQLRKVYL (182 aa). Catalysis depends on residues Arg145, Lys169, His238, Arg241, and His264. Catalysis depends on Tyr273, which acts as the O-(3'-phospho-DNA)-tyrosine intermediate.

The protein belongs to the 'phage' integrase family. XerC subfamily. As to quaternary structure, forms a cyclic heterotetrameric complex composed of two molecules of XerC and two molecules of XerD.

The protein resides in the cytoplasm. Functionally, site-specific tyrosine recombinase, which acts by catalyzing the cutting and rejoining of the recombining DNA molecules. The XerC-XerD complex is essential to convert dimers of the bacterial chromosome into monomers to permit their segregation at cell division. It also contributes to the segregational stability of plasmids. This chain is Tyrosine recombinase XerC, found in Staphylococcus aureus (strain MRSA252).